Here is a 146-residue protein sequence, read N- to C-terminus: Large-conductance mechanosensitive channel (146 aa).

The next 3 helical transmembrane spans lie at 21 to 41, 44 to 64, and 83 to 103; these read VGII…ADLI, IIGL…LGDG, and GSFI…FLLV.

This sequence belongs to the MscL family. Homopentamer.

The protein resides in the cell inner membrane. Channel that opens in response to stretch forces in the membrane lipid bilayer. May participate in the regulation of osmotic pressure changes within the cell. This chain is Large-conductance mechanosensitive channel, found in Cereibacter sphaeroides (strain ATCC 17029 / ATH 2.4.9) (Rhodobacter sphaeroides).